A 365-amino-acid chain; its full sequence is GTPase Obg (365 aa).

The region spanning 2–160 (ESFVDEVAIE…KFLRLSLKLL (159 aa)) is the Obg domain. The OBG-type G domain maps to 161-329 (ADVGIVGLPN…LLEAMDEAFF (169 aa)). Residues 167 to 174 (GLPNAGKS), 192 to 196 (FTTLS), 215 to 218 (DIPG), 282 to 285 (NKID), and 310 to 312 (SAD) contribute to the GTP site. Mg(2+) is bound by residues serine 174 and threonine 194.

It belongs to the TRAFAC class OBG-HflX-like GTPase superfamily. OBG GTPase family. In terms of assembly, monomer. Mg(2+) serves as cofactor.

It localises to the cytoplasm. In terms of biological role, an essential GTPase which binds GTP, GDP and possibly (p)ppGpp with moderate affinity, with high nucleotide exchange rates and a fairly low GTP hydrolysis rate. Plays a role in control of the cell cycle, stress response, ribosome biogenesis and in those bacteria that undergo differentiation, in morphogenesis control. The chain is GTPase Obg from Leptospira borgpetersenii serovar Hardjo-bovis (strain JB197).